We begin with the raw amino-acid sequence, 235 residues long: Purine nucleoside phosphorylase DeoD-type (235 aa).

Histidine 4 provides a ligand contact to a purine D-ribonucleoside. Phosphate-binding positions include glycine 20, arginine 24, arginine 43, and 87–90 (RVGT). Residues 180 to 182 (EME) and 204 to 205 (SD) each bind a purine D-ribonucleoside. Aspartate 205 functions as the Proton donor in the catalytic mechanism.

Belongs to the PNP/UDP phosphorylase family. Homohexamer; trimer of homodimers.

It catalyses the reaction a purine D-ribonucleoside + phosphate = a purine nucleobase + alpha-D-ribose 1-phosphate. The catalysed reaction is a purine 2'-deoxy-D-ribonucleoside + phosphate = a purine nucleobase + 2-deoxy-alpha-D-ribose 1-phosphate. Its function is as follows. Catalyzes the reversible phosphorolytic breakdown of the N-glycosidic bond in the beta-(deoxy)ribonucleoside molecules, with the formation of the corresponding free purine bases and pentose-1-phosphate. In Oceanobacillus iheyensis (strain DSM 14371 / CIP 107618 / JCM 11309 / KCTC 3954 / HTE831), this protein is Purine nucleoside phosphorylase DeoD-type.